Consider the following 331-residue polypeptide: Probable cytosolic iron-sulfur protein assembly protein Ciao1 (331 aa).

WD repeat units lie at residues 12-51 (GHKG…WTTK), 57-96 (GHKR…ATLE), 97-136 (GHEN…EFEC), 142-181 (AHTQ…SDWD), 188-227 (SHTS…NEAG), 246-285 (QHSR…KRDE), and 297-331 (AHEQ…KLQE).

Belongs to the WD repeat CIA1 family.

In terms of biological role, essential component of the cytosolic iron-sulfur (Fe/S) protein assembly machinery. Required for the maturation of extramitochondrial Fe/S proteins. This chain is Probable cytosolic iron-sulfur protein assembly protein Ciao1, found in Drosophila grimshawi (Hawaiian fruit fly).